We begin with the raw amino-acid sequence, 365 residues long: Holliday junction branch migration complex subunit RuvB (365 aa).

A large ATPase domain (RuvB-L) region spans residues 1 to 191 (MNFDPIDDFD…FGFTAHMDFY (191 aa)). ATP-binding positions include L30, R31, G72, K75, T76, S77, 138 to 140 (EDF), R181, Y191, and R228. T76 is a binding site for Mg(2+). The segment at 192–262 (EPEELQQILM…VAQAALAVYD (71 aa)) is small ATPAse domain (RuvB-S). The segment at 265-365 (QLGLDRLDRS…QATLFDPNGE (101 aa)) is head domain (RuvB-H). Residues R320 and R325 each coordinate DNA.

Belongs to the RuvB family. In terms of assembly, homohexamer. Forms an RuvA(8)-RuvB(12)-Holliday junction (HJ) complex. HJ DNA is sandwiched between 2 RuvA tetramers; dsDNA enters through RuvA and exits via RuvB. An RuvB hexamer assembles on each DNA strand where it exits the tetramer. Each RuvB hexamer is contacted by two RuvA subunits (via domain III) on 2 adjacent RuvB subunits; this complex drives branch migration. In the full resolvosome a probable DNA-RuvA(4)-RuvB(12)-RuvC(2) complex forms which resolves the HJ.

It localises to the cytoplasm. It catalyses the reaction ATP + H2O = ADP + phosphate + H(+). Its function is as follows. The RuvA-RuvB-RuvC complex processes Holliday junction (HJ) DNA during genetic recombination and DNA repair, while the RuvA-RuvB complex plays an important role in the rescue of blocked DNA replication forks via replication fork reversal (RFR). RuvA specifically binds to HJ cruciform DNA, conferring on it an open structure. The RuvB hexamer acts as an ATP-dependent pump, pulling dsDNA into and through the RuvAB complex. RuvB forms 2 homohexamers on either side of HJ DNA bound by 1 or 2 RuvA tetramers; 4 subunits per hexamer contact DNA at a time. Coordinated motions by a converter formed by DNA-disengaged RuvB subunits stimulates ATP hydrolysis and nucleotide exchange. Immobilization of the converter enables RuvB to convert the ATP-contained energy into a lever motion, pulling 2 nucleotides of DNA out of the RuvA tetramer per ATP hydrolyzed, thus driving DNA branch migration. The RuvB motors rotate together with the DNA substrate, which together with the progressing nucleotide cycle form the mechanistic basis for DNA recombination by continuous HJ branch migration. Branch migration allows RuvC to scan DNA until it finds its consensus sequence, where it cleaves and resolves cruciform DNA. The chain is Holliday junction branch migration complex subunit RuvB from Rhodococcus erythropolis (strain PR4 / NBRC 100887).